The primary structure comprises 80 residues: uncharacterized protein (80 aa).

2 consecutive 4Fe-4S ferredoxin-type domains span residues 21–49 (KIIE…AIKN) and 50–80 (NRVV…LYDA). [4Fe-4S] cluster is bound by residues cysteine 30, cysteine 33, cysteine 36, cysteine 40, cysteine 60, cysteine 63, cysteine 66, and cysteine 70.

[4Fe-4S] cluster serves as cofactor.

This is an uncharacterized protein from Methanocaldococcus jannaschii (strain ATCC 43067 / DSM 2661 / JAL-1 / JCM 10045 / NBRC 100440) (Methanococcus jannaschii).